A 420-amino-acid polypeptide reads, in one-letter code: Glucose-1-phosphate adenylyltransferase (420 aa).

Alpha-D-glucose 1-phosphate-binding positions include tyrosine 107, glycine 173, 188–189 (EK), and serine 206.

This sequence belongs to the bacterial/plant glucose-1-phosphate adenylyltransferase family. Homotetramer.

The enzyme catalyses alpha-D-glucose 1-phosphate + ATP + H(+) = ADP-alpha-D-glucose + diphosphate. Its pathway is glycan biosynthesis; glycogen biosynthesis. Its function is as follows. Involved in the biosynthesis of ADP-glucose, a building block required for the elongation reactions to produce glycogen. Catalyzes the reaction between ATP and alpha-D-glucose 1-phosphate (G1P) to produce pyrophosphate and ADP-Glc. This is Glucose-1-phosphate adenylyltransferase from Shewanella frigidimarina (strain NCIMB 400).